The sequence spans 244 residues: tRNA pseudouridine synthase A (244 aa).

Asp52 serves as the catalytic Nucleophile. Substrate is bound at residue Tyr110.

The protein belongs to the tRNA pseudouridine synthase TruA family. In terms of assembly, homodimer.

The catalysed reaction is uridine(38/39/40) in tRNA = pseudouridine(38/39/40) in tRNA. Formation of pseudouridine at positions 38, 39 and 40 in the anticodon stem and loop of transfer RNAs. The chain is tRNA pseudouridine synthase A from Geotalea daltonii (strain DSM 22248 / JCM 15807 / FRC-32) (Geobacter daltonii).